The chain runs to 127 residues: Spore germination protein 1 (127 aa).

The N-terminal stretch at 1-25 (MNIKNSLILIISTIFVLSMINGGLT) is a signal peptide. Asparagine 54 and asparagine 118 each carry an N-linked (GlcNAc...) asparagine glycan.

Belongs to the Dictyostelium gerABC family.

It is found in the secreted. In Dictyostelium discoideum (Social amoeba), this protein is Spore germination protein 1 (gerA).